A 171-amino-acid polypeptide reads, in one-letter code: Translation initiation factor IF-3 (171 aa).

It belongs to the IF-3 family. In terms of assembly, monomer.

The protein resides in the cytoplasm. In terms of biological role, IF-3 binds to the 30S ribosomal subunit and shifts the equilibrium between 70S ribosomes and their 50S and 30S subunits in favor of the free subunits, thus enhancing the availability of 30S subunits on which protein synthesis initiation begins. This is Translation initiation factor IF-3 from Halalkalibacterium halodurans (strain ATCC BAA-125 / DSM 18197 / FERM 7344 / JCM 9153 / C-125) (Bacillus halodurans).